The sequence spans 146 residues: Hydroxyproline-rich systemin (146 aa).

The first 24 residues, 1-24 (MISFFRAFFLIIIISFLIFVGAQA), serve as a signal peptide directing secretion. The propeptide occupies 25–48 (RTLLGNYHDDEMLIELKLESGNYG). The disordered stretch occupies residues 47 to 128 (YGRTPYKTPP…PPPPKPQDEQ (82 aa)). Residues Pro-51, Pro-55, Pro-56, Pro-57, Pro-58, and Pro-63 each carry the 4-hydroxyproline modification. Residues Pro-51, Pro-55, Pro-56, Pro-57, Pro-58, and Pro-63 are each glycosylated (O-linked (Ara...) hydroxyproline). Positions 67 to 70 (EIVN) are excised as a propeptide. 3 positions are modified to 4-hydroxyproline: Pro-79, Pro-80, and Pro-82. Pro-79, Pro-80, and Pro-82 each carry an O-linked (Ara...) hydroxyproline glycan. A propeptide spanning residues 86–110 (PIIGQLTTITTTPHHDDTVAAPPVG) is cleaved from the precursor. Residues Pro-119, Pro-120, Pro-121, and Pro-122 each carry the 4-hydroxyproline modification. O-linked (Ara...) hydroxyproline glycans are attached at residues Pro-119, Pro-120, Pro-121, and Pro-122. A propeptide spanning residues 131–146 (IIITSSSSTLPLQASY) is cleaved from the precursor.

O-glycosylated; contains pentose side chains. As to expression, leaves.

Its subcellular location is the secreted. Its function is as follows. Activates a lipid-based signal transduction pathway in which linolenic acid is converted to jasmonic acid, a potent activator of defense gene transcription. Induces synthesis of proteinase inhibitors I and II in leaves when supplied through cut stems. This chain is Hydroxyproline-rich systemin, found in Solanum lycopersicum (Tomato).